The following is a 239-amino-acid chain: RBPJ-interacting and tubulin-associated protein 1 (239 aa).

The short motif at 12-24 is the Nuclear export signal element; it reads LDLSITGHSTALP. Disordered stretches follow at residues 62 to 97 and 149 to 239; these read APPS…TPRK and LVQQ…PPWK. The short motif at 93–109 is the Nuclear localization signal element; it reads GTPRKKIQYRVKSRTPS. Positions 129 to 158 are interaction with RBPJ/RBPSUH; it reads WVKKEDTVKIRPLLWSPSPRLVQQSSMQNA. Composition is skewed to polar residues over residues 149 to 159 and 203 to 221; these read LVQQSSMQNAK and RQRQ…SCSG. Residues 158-239 are interaction with tubulin; sequence AKQGPLRAVH…VKMQERPPWK (82 aa).

The protein belongs to the RITA family. As to quaternary structure, interacts with rbpj/rbpsuh.

The protein localises to the cytoplasm. It is found in the nucleus. Functionally, tubulin-binding protein that acts as a negative regulator of Notch signaling pathway. Shuttles between the cytoplasm and the nucleus and mediates the nuclear export of rbpj/rbpsuh, thereby preventing the interaction between rbpj/rbpsuh and NICD product of Notch proteins (Notch intracellular domain), leading to down-regulate Notch-mediated transcription. May play a role in neurogenesis. The chain is RBPJ-interacting and tubulin-associated protein 1 (rita1) from Xenopus laevis (African clawed frog).